Here is a 36-residue protein sequence, read N- to C-terminus: uncharacterized protein (36 aa).

The helical transmembrane segment at 13 to 35 (SVILSPFPCCVLKSYLTVIYISF) threads the bilayer.

The protein resides in the host membrane. This is an uncharacterized protein from Pseudoalteromonas espejiana (Bacteriophage PM2).